Here is a 244-residue protein sequence, read N- to C-terminus: Glucosamine-6-phosphate deaminase (244 aa).

The Proton acceptor; for enolization step role is filled by Asp-67. Asn-136 functions as the For ring-opening step in the catalytic mechanism. Residue His-138 is the Proton acceptor; for ring-opening step of the active site. Glu-143 functions as the For ring-opening step in the catalytic mechanism.

It belongs to the glucosamine/galactosamine-6-phosphate isomerase family. NagB subfamily.

It carries out the reaction alpha-D-glucosamine 6-phosphate + H2O = beta-D-fructose 6-phosphate + NH4(+). It functions in the pathway amino-sugar metabolism; N-acetylneuraminate degradation; D-fructose 6-phosphate from N-acetylneuraminate: step 5/5. Functionally, catalyzes the reversible isomerization-deamination of glucosamine 6-phosphate (GlcN6P) to form fructose 6-phosphate (Fru6P) and ammonium ion. The protein is Glucosamine-6-phosphate deaminase of Clostridium botulinum (strain Okra / Type B1).